Consider the following 324-residue polypeptide: Olfactory receptor 11H4 (324 aa).

At 1 to 35 (MSFFFVDLRPMNRSATHIVTEFILLGFPGCWKIQI) the chain is on the extracellular side. Asn-12 is a glycosylation site (N-linked (GlcNAc...) asparagine). Residues 36–56 (FLFSLFLVIYVLTLLGNGAII) form a helical membrane-spanning segment. Topologically, residues 57–64 (YAVRCNPL) are cytoplasmic. A helical transmembrane segment spans residues 65–85 (LHTPMYFLLGNFAFLEIWYVS). At 86–109 (STIPNMLVNILSKTKAISFSGCFL) the chain is on the extracellular side. A disulfide bridge links Cys-107 with Cys-199. The chain crosses the membrane as a helical span at residues 110 to 130 (QFYFFFSLGTTECLFLAVMAY). Over 131–149 (DRYLAICHPLQYPAIMTVR) the chain is Cytoplasmic. A helical membrane pass occupies residues 150–170 (FCGKLVSFCWLIGFLGYPIPI). At 171–207 (FYISQLPFCGPNIIDHFLCDMDPLMALSCAPAPITEC) the chain is on the extracellular side. Residues 208–227 (IFYTQSSLVLFFTSMYILRS) traverse the membrane as a helical segment. At 228–247 (YILLLTAVFQVPSAAGRRKA) the chain is on the cytoplasmic side. Residues 248 to 268 (FSTCGSHLVVVSLFYGTVMVM) traverse the membrane as a helical segment. The Extracellular portion of the chain corresponds to 269–281 (YVSPTYGIPTLLQ). The chain crosses the membrane as a helical span at residues 282–302 (KILTLVYSVTTPLFNPLIYTL). Topologically, residues 303 to 324 (RNKDMKLALRNVLFGMRIRQNS) are cytoplasmic.

The protein belongs to the G-protein coupled receptor 1 family.

Its subcellular location is the cell membrane. Functionally, odorant receptor. The protein is Olfactory receptor 11H4 (OR11H4) of Homo sapiens (Human).